A 639-amino-acid chain; its full sequence is ATP-dependent zinc metalloprotease FtsH (639 aa).

Residues 1–20 (MNGNNNMNNNGKSNNKKKNK) lie on the Cytoplasmic side of the membrane. A helical transmembrane segment spans residues 21–41 (NWILGLVVVFLISAIFMSYFI). Residues 42–120 (RGGESYKNVP…LSSGKSQASL (79 aa)) are Periplasmic-facing. Residues 121-141 (IGVLLQTLPWILFFIFFFFIF) form a helical membrane-spanning segment. Residues 142 to 639 (RQTQGGGGKV…KEVKGEDVKG (498 aa)) lie on the Cytoplasmic side of the membrane. 212–219 (GSPGTGKT) contacts ATP. A Zn(2+)-binding site is contributed by histidine 434. Glutamate 435 is an active-site residue. Residues histidine 438 and aspartate 510 each contribute to the Zn(2+) site.

In the central section; belongs to the AAA ATPase family. The protein in the C-terminal section; belongs to the peptidase M41 family. Homohexamer. Zn(2+) serves as cofactor.

It is found in the cell inner membrane. Functionally, acts as a processive, ATP-dependent zinc metallopeptidase for both cytoplasmic and membrane proteins. Plays a role in the quality control of integral membrane proteins. This chain is ATP-dependent zinc metalloprotease FtsH, found in Borreliella burgdorferi (strain ZS7) (Borrelia burgdorferi).